Here is a 165-residue protein sequence, read N- to C-terminus: NADPH-dependent 7-cyano-7-deazaguanine reductase (165 aa).

C56 serves as the catalytic Thioimide intermediate. D63 acts as the Proton donor in catalysis. Residues 78 to 80 (VES) and 97 to 98 (HE) each bind substrate.

Belongs to the GTP cyclohydrolase I family. QueF type 1 subfamily.

The protein resides in the cytoplasm. The enzyme catalyses 7-aminomethyl-7-carbaguanine + 2 NADP(+) = 7-cyano-7-deazaguanine + 2 NADPH + 3 H(+). Its pathway is tRNA modification; tRNA-queuosine biosynthesis. In terms of biological role, catalyzes the NADPH-dependent reduction of 7-cyano-7-deazaguanine (preQ0) to 7-aminomethyl-7-deazaguanine (preQ1). The polypeptide is NADPH-dependent 7-cyano-7-deazaguanine reductase (Bacillus thuringiensis subsp. konkukian (strain 97-27)).